The sequence spans 297 residues: Guanylate kinase (297 aa).

The Guanylate kinase-like domain occupies G4–H183. ATP is bound at residue G11–G18. The interval E204–F297 is unknown.

Belongs to the guanylate kinase family.

The protein localises to the cytoplasm. The catalysed reaction is GMP + ATP = GDP + ADP. Essential for recycling GMP and indirectly, cGMP. This Mycoplasma capricolum subsp. capricolum (strain California kid / ATCC 27343 / NCTC 10154) protein is Guanylate kinase (gmk).